The sequence spans 233 residues: Large ribosomal subunit protein uL1 (233 aa).

It belongs to the universal ribosomal protein uL1 family. As to quaternary structure, part of the 50S ribosomal subunit.

Functionally, binds directly to 23S rRNA. The L1 stalk is quite mobile in the ribosome, and is involved in E site tRNA release. In terms of biological role, protein L1 is also a translational repressor protein, it controls the translation of the L11 operon by binding to its mRNA. In Shewanella putrefaciens (strain CN-32 / ATCC BAA-453), this protein is Large ribosomal subunit protein uL1.